The sequence spans 224 residues: Cell division protein SepF (224 aa).

The tract at residues 21 to 78 (DDYYEDDDRGPAPRGYRRPREDRFEDEGYAPRGYDGHPEDRRRDYDEPPAYRAGLAGG) is disordered. Positions 54 to 66 (YDGHPEDRRRDYD) are enriched in basic and acidic residues.

The protein belongs to the SepF family. Homodimer. Interacts with FtsZ.

The protein resides in the cytoplasm. In terms of biological role, cell division protein that is part of the divisome complex and is recruited early to the Z-ring. Probably stimulates Z-ring formation, perhaps through the cross-linking of FtsZ protofilaments. Its function overlaps with FtsA. This is Cell division protein SepF from Mycolicibacterium gilvum (strain PYR-GCK) (Mycobacterium gilvum (strain PYR-GCK)).